Reading from the N-terminus, the 156-residue chain is Peptidyl-prolyl cis-trans isomerase cypE (156 aa).

Residues 2-155 form the PPIase cyclophilin-type domain; it reads TEQTVTLQTT…DEIRIIKATA (154 aa).

This sequence belongs to the cyclophilin-type PPIase family. Interacts with snwA.

The protein resides in the cytoplasm. It localises to the nucleus. It carries out the reaction [protein]-peptidylproline (omega=180) = [protein]-peptidylproline (omega=0). Its function is as follows. Catalyzes the cis-trans isomerization of proline imidic peptide bonds in oligopeptides. Plays a role in protein folding, transport and assembly. In Dictyostelium discoideum (Social amoeba), this protein is Peptidyl-prolyl cis-trans isomerase cypE (cypE).